A 149-amino-acid polypeptide reads, in one-letter code: Nucleoside diphosphate kinase (149 aa).

The ATP site is built by Lys-9, Phe-57, Arg-85, Thr-91, Arg-102, and Asn-112. His-115 functions as the Pros-phosphohistidine intermediate in the catalytic mechanism.

Belongs to the NDK family. In terms of assembly, homotetramer. Mg(2+) serves as cofactor.

Its subcellular location is the cytoplasm. The enzyme catalyses a 2'-deoxyribonucleoside 5'-diphosphate + ATP = a 2'-deoxyribonucleoside 5'-triphosphate + ADP. The catalysed reaction is a ribonucleoside 5'-diphosphate + ATP = a ribonucleoside 5'-triphosphate + ADP. Major role in the synthesis of nucleoside triphosphates other than ATP. The ATP gamma phosphate is transferred to the NDP beta phosphate via a ping-pong mechanism, using a phosphorylated active-site intermediate. In Pelotomaculum thermopropionicum (strain DSM 13744 / JCM 10971 / SI), this protein is Nucleoside diphosphate kinase.